The chain runs to 591 residues: MKYILVTGGVISGIGKGIIASSVGTILKSCGLHVTAIKIDPYINIDAGTFSPYEHGEVFVLDDGGEVDLDLGNYERFLDIRLTKDNNLTTGKIYQSVINKERRGDYLGKTVQVVPHITDAIQEWVMRQAKIPVDDDDVEPQVCVIELGGTVGDIESMPFVEAFRQFQFKVKRENFCNIHVSLVPQPSATGEQKTKPTQNSVRELRGLGLSPDLIMCRCSTPLDNSVKEKISMFCHVEPEQVICVHDVSSIYRVPLLLEDQGVVGYFCRRLNLPIENRPRKMLAKWKEMSDRSDRLLEQCSIALVGKYTKFSDSYASVIKALEHSALAISHKLEVKYVDSADLEPSMLQEEPVKYHEAWQKLCSSDGILVPGGFGVRGTEGKIQAINWARKQKKPFLGVCLGMQLAVCEFARNMLDWTDANSTEFDPETKHPVVIDMPEHNPGQMGGTMRLGKRRTIFKNKSSILRKLYGDVDYVEERHRHRFEVNPELKHHFEEKGFRFVGQDVEGERMEVIEMDDHPYFVGVQYHPEFTSRPIKPSPPYLGLLLAAAGRLQSYLQKGCRLSPRDAYSDRSGSSSPDLEIADLKLRSIAQE.

The Glutamine amidotransferase type-1 domain maps to 300–554; the sequence is SIALVGKYTK…LAAAGRLQSY (255 aa). Active-site for GATase activity residues include Cys-399, His-526, and Glu-528. Phosphoserine is present on residues Ser-571 and Ser-575.

This sequence belongs to the CTP synthase family.

It carries out the reaction UTP + L-glutamine + ATP + H2O = CTP + L-glutamate + ADP + phosphate + 2 H(+). It participates in pyrimidine metabolism; CTP biosynthesis via de novo pathway; CTP from UDP: step 2/2. In terms of biological role, this enzyme is involved in the de novo synthesis of CTP, a precursor of DNA, RNA and phospholipids. Catalyzes the ATP-dependent amination of UTP to CTP with either L-glutamine or ammonia as a source of nitrogen. The polypeptide is CTP synthase 1 (ctps1) (Danio rerio (Zebrafish)).